The sequence spans 135 residues: Centromere protein S (135 aa).

The tract at residues 103-135 (SLEQKEKKKKKSVSGGNVSRNSDMDTVVPESKD) is disordered.

It belongs to the TAF9 family. CENP-S/MHF1 subfamily. Heterodimer with CENPX, sometimes called MHF; this interaction stabilizes both partners. MHF heterodimers can assemble to form tetrameric structures. MHF also coassemble with CENPT-CENPW heterodimers at centromeres to form the tetrameric CENP-T-W-S-X complex. Forms a discrete complex with FANCM and CENPX, called FANCM-MHF; this interaction, probably mediated by direct binding between CENPS and FANCM, leads to synergistic activation of double-stranded DNA binding and strongly stimulates FANCM-mediated DNA remodeling. Recruited by FANCM to the Fanconi anemia (FA) core complex, which consists of CENPS, CENPX, FANCA, FANCB, FANCC, FANCE, FANCF, FANCG, FANCL, FANCM, FAAP24 and FAAP100. The FA core complex associates with Bloom syndrome (BLM) complex, which consists of at least BLM, DNA topoisomerase 3-alpha (TOP3A), RMI1/BLAP75, RPA1/RPA70 and RPA2/RPA32. The super complex between FA and BLM is called BRAFT. Component of the CENPA-CAD complex, composed of CENPI, CENPK, CENPL, CENPO, CENPP, CENPQ, CENPR and CENPS. The CENPA-CAD complex is probably recruited on centromeres by the CENPA-NAC complex, at least composed of CENPA, CENPC, CENPH, CENPM, CENPN, CENPT and CENPU.

It is found in the nucleus. It localises to the chromosome. Its subcellular location is the centromere. The protein localises to the kinetochore. DNA-binding component of the Fanconi anemia (FA) core complex. Required for the normal activation of the FA pathway, leading to monoubiquitination of the FANCI-FANCD2 complex in response to DNA damage, cellular resistance to DNA cross-linking drugs, and prevention of chromosomal breakage. In complex with CENPX (MHF heterodimer), crucial cofactor for FANCM in both binding and ATP-dependent remodeling of DNA. Stabilizes FANCM. In complex with CENPX and FANCM (but not other FANC proteins), rapidly recruited to blocked forks and promotes gene conversion at blocked replication forks. In complex with CENPT, CENPW and CENPX (CENP-T-W-S-X heterotetramer), involved in the formation of a functional kinetochore outer plate, which is essential for kinetochore-microtubule attachment and faithful mitotic progression. As a component of MHF and CENP-T-W-S-X complexes, binds DNA and bends it to form a nucleosome-like structure. DNA-binding function is fulfilled in the presence of CENPX, with the following preference for DNA substates: Holliday junction &gt; double-stranded &gt; splay arm &gt; single-stranded. Does not bind DNA on its own. The chain is Centromere protein S (cenps) from Xenopus laevis (African clawed frog).